Consider the following 88-residue polypeptide: Parvalbumin beta 3 (88 aa).

Position 1 is an N-acetylalanine (alanine 1). In terms of domain architecture, EF-hand spans 31–66 (KSPEEVKKFFAIIDQDHSGFIEEEELKLFLQTFSAG). Ca(2+) is bound by residues aspartate 44, aspartate 46, serine 48, phenylalanine 50, glutamate 52, glutamate 55, and glutamate 81.

The protein belongs to the parvalbumin family.

In terms of biological role, in muscle, parvalbumin is thought to be involved in relaxation after contraction. It binds two calcium ions. The chain is Parvalbumin beta 3 from Merluccius productus (North Pacific hake).